A 55-amino-acid polypeptide reads, in one-letter code: Large ribosomal subunit protein bL33 (55 aa).

Residues 1-11 are compositionally biased toward basic and acidic residues; sequence MAKGGREKIKL. Positions 1-27 are disordered; it reads MAKGGREKIKLESTAGTGHFYTTSKNK. Over residues 14–24 the composition is skewed to polar residues; sequence TAGTGHFYTTS.

It belongs to the bacterial ribosomal protein bL33 family.

This is Large ribosomal subunit protein bL33 from Dechloromonas aromatica (strain RCB).